The chain runs to 702 residues: MIHTLETTVAGRKMKVDFGKTGMLSNAAIFMSYGDTVVMINANASKEPREGIDFFPLSVEYEERLYSVGKIPGGFIKREGKPSDKSILHARSIDRPLRPLFPKGYRNDVQIVNTVLSVEQDNLPEILAINGSSLALCLSSIPFTTPVAAVSVGLVDGEFIINPTVAQRENTILDLTVCATKERVMMVEAGGQEIDEETMYSAIMFGFEECKNIVAFQEEAVAKFGKTKNEPVLYKADEEVEKEVKSFAFDMIKEAMYIMDKDERNAQLDKVKEKISEEFSEKYEDKVADIAEVIYKTQKEIVRNMLLNEDRRPDGRAFDEVRPISCEVGILPRTHGTGLFTRGLTQVMTVATLGALGDVQILDGIAEEESKRYMHHYNFPSYSVGEVRPLRGPGRREIGHGALAERALEPLIPSESEFPYTIRLVSEVLSSNGSTSQASVCGSTLALLDAGVPIKRPAAGIAMGLITSEDLEKEKVITDIQGIEDFFGDMDFKVAGTEKGITSIQFDTKIKGLSNSCVKDALEGAKKARLHILGKIKECIPEPRKELSKYAPRTEIICIDPEKIRDVIGAGGKVINKIIADTNVKIEIKEDGKIFVTSNNEPEGVKKAISIIEGLTKEVVQGEIYLGKVTKTTNFGAFVEILPGKEGLVHISKLDFARVEKVEDVVSVGDEILVKVTDIDNQGRINLSRKDAIAKKEEEKDK.

Mg(2+) is bound by residues Asp-485 and Asp-491. Positions 552–612 (PRTEIICIDP…EGVKKAISII (61 aa)) constitute a KH domain. The region spanning 622–690 (GEIYLGKVTK…NQGRINLSRK (69 aa)) is the S1 motif domain.

It belongs to the polyribonucleotide nucleotidyltransferase family. Requires Mg(2+) as cofactor.

The protein localises to the cytoplasm. It catalyses the reaction RNA(n+1) + phosphate = RNA(n) + a ribonucleoside 5'-diphosphate. In terms of biological role, involved in mRNA degradation. Catalyzes the phosphorolysis of single-stranded polyribonucleotides processively in the 3'- to 5'-direction. The chain is Polyribonucleotide nucleotidyltransferase from Clostridium botulinum (strain Loch Maree / Type A3).